The primary structure comprises 288 residues: Protoheme IX farnesyltransferase (288 aa).

9 consecutive transmembrane segments (helical) span residues isoleucine 8–alanine 28, valine 35–phenylalanine 55, isoleucine 75–leucine 95, phenylalanine 105–leucine 125, serine 130–cysteine 150, phenylalanine 161–valine 181, isoleucine 205–glycine 225, asparagine 230–phenylalanine 250, and isoleucine 265–lysine 285.

Belongs to the UbiA prenyltransferase family. Protoheme IX farnesyltransferase subfamily.

The protein resides in the cell membrane. It carries out the reaction heme b + (2E,6E)-farnesyl diphosphate + H2O = Fe(II)-heme o + diphosphate. The protein operates within porphyrin-containing compound metabolism; heme O biosynthesis; heme O from protoheme: step 1/1. Functionally, converts heme B (protoheme IX) to heme O by substitution of the vinyl group on carbon 2 of heme B porphyrin ring with a hydroxyethyl farnesyl side group. The protein is Protoheme IX farnesyltransferase of Wigglesworthia glossinidia brevipalpis.